The following is an 870-amino-acid chain: MOG interacting and ectopic P-granules protein 1 (870 aa).

The disordered stretch occupies residues 1-244 (MVTADETVLA…VPEEDNNEQA (244 aa)). Polar residues predominate over residues 9–20 (LATTTNTTSMSV). A compositionally biased stretch (basic and acidic residues) spans 41–51 (EQLKAEQREVM). 3 stretches are compositionally biased toward acidic residues: residues 77 to 99 (EVIEIDDTEESTDPSPDGSDENG), 129 to 142 (IEQDDDGDVMEITE), and 203 to 214 (IELDDDDDDEIQ). C2H2-type zinc fingers lie at residues 421–444 (HRCDVCGFQTESKLVMSTHKENLH) and 450–473 (FQCTMCKETDTSEQRMKDHYFETH). The segment at 486 to 508 (YPCAICEEDFNFKGVREQHYKQC) adopts a CCHC-type zinc-finger fold. Composition is skewed to polar residues over residues 673 to 688 (LQAAVNSMRSQNSQKT) and 695 to 708 (KLVTTPSHATVGSS). Positions 673–708 (LQAAVNSMRSQNSQKTPTHRSSKLVTTPSHATVGSS) are disordered. C2H2-type zinc fingers lie at residues 713–736 (FVCEICDASVQEKEKYLQHLQTTH), 753–776 (LACSRCRDRFWTYEGLERHLVMSH), 794–815 (GRCKTCGKNYAFNMLQHLVADH), and 826–849 (YSCDVCAFKCSSYQTLEAHLTSNH). Residues 847 to 870 (SNHPKGDKKTSTPAKKDDCITLDD) are disordered. Over residues 850 to 870 (PKGDKKTSTPAKKDDCITLDD) the composition is skewed to basic and acidic residues.

Interacts with hda-1, let-418, lin-1, mog-1, mog-4, mog-5, mog-6, pie-1 and unc-98. In terms of processing, sumoylated. As to expression, expressed in somatic cells of embryos, the head, hypodermis and tail of larvae and the germline of adults, including oocytes but not mature sperm and spermatocytes.

The protein localises to the nucleus. Has a broad role in development, specifically in the genetic pathway SynMuvB that negatively regulates specification of the vulval cell fate. Required for fem-3 3'-UTR-mediated repression in the regulation of the sperm/oocyte switch. Acts by regulating the translation of fem-3 mRNA, by binding to its 3'-UTR. The protein is MOG interacting and ectopic P-granules protein 1 of Caenorhabditis elegans.